The primary structure comprises 1040 residues: Alpha-mannosidase 2C1 (1040 aa).

His-260, Asp-262, Asp-372, and His-577 together coordinate Co(2+). Asp-372 functions as the Nucleophile in the catalytic mechanism.

The protein belongs to the glycosyl hydrolase 38 family. The cofactor is Co(2+).

The protein resides in the cytoplasm. It carries out the reaction Hydrolysis of terminal, non-reducing alpha-D-mannose residues in alpha-D-mannosides.. With respect to regulation, strongly inhibited by swainsonine. Also inhibited to a lesser extent by deoxymannojirimycin (DMM). Functionally, cleaves alpha 1,2-, alpha 1,3-, and alpha 1,6-linked mannose residues on cytoplasmic free oligosaccharides generated by N-glycoprotein degradation pathways. This chain is Alpha-mannosidase 2C1 (MAN2C1), found in Homo sapiens (Human).